A 159-amino-acid polypeptide reads, in one-letter code: Endoribonuclease YbeY (159 aa).

The Zn(2+) site is built by His125, His129, and His135.

It belongs to the endoribonuclease YbeY family. Zn(2+) serves as cofactor.

Its subcellular location is the cytoplasm. Single strand-specific metallo-endoribonuclease involved in late-stage 70S ribosome quality control and in maturation of the 3' terminus of the 16S rRNA. This is Endoribonuclease YbeY from Ligilactobacillus salivarius (strain UCC118) (Lactobacillus salivarius).